Consider the following 467-residue polypeptide: Spermatogenesis- and oogenesis-specific basic helix-loop-helix-containing protein 2 (467 aa).

A bHLH domain is found at glutamine 200–valine 251. Positions alanine 443 to proline 453 are enriched in low complexity. The segment at alanine 443 to phenylalanine 467 is disordered.

In terms of assembly, forms both hetero- and homodimers with SOHLH1. In terms of tissue distribution, preferentially expressed in the adult ovary and testis. Expressed in the majority of spermatogonia in adult animals, but not in the most undifferentiated spermatogonial population.

Its subcellular location is the nucleus. The protein resides in the cytoplasm. Functionally, transcription regulator of both male and female germline differentiation. Suppresses genes involved in spermatogonial stem cells maintenance, and induces genes important for spermatogonial differentiation. Coordinates oocyte differentiation without affecting meiosis I. The protein is Spermatogenesis- and oogenesis-specific basic helix-loop-helix-containing protein 2 (Sohlh2) of Mus musculus (Mouse).